The chain runs to 182 residues: ATP synthase subunit b (182 aa).

A helical membrane pass occupies residues 25–45; the sequence is VVLAGFAVLFYIVVKFVVPMF.

Belongs to the ATPase B chain family. F-type ATPases have 2 components, F(1) - the catalytic core - and F(0) - the membrane proton channel. F(1) has five subunits: alpha(3), beta(3), gamma(1), delta(1), epsilon(1). F(0) has three main subunits: a(1), b(2) and c(10-14). The alpha and beta chains form an alternating ring which encloses part of the gamma chain. F(1) is attached to F(0) by a central stalk formed by the gamma and epsilon chains, while a peripheral stalk is formed by the delta and b chains.

Its subcellular location is the cell membrane. Its function is as follows. F(1)F(0) ATP synthase produces ATP from ADP in the presence of a proton or sodium gradient. F-type ATPases consist of two structural domains, F(1) containing the extramembraneous catalytic core and F(0) containing the membrane proton channel, linked together by a central stalk and a peripheral stalk. During catalysis, ATP synthesis in the catalytic domain of F(1) is coupled via a rotary mechanism of the central stalk subunits to proton translocation. In terms of biological role, component of the F(0) channel, it forms part of the peripheral stalk, linking F(1) to F(0). The polypeptide is ATP synthase subunit b (Arthrobacter sp. (strain FB24)).